The following is a 200-amino-acid chain: Octanoyltransferase (200 aa).

One can recognise a BPL/LPL catalytic domain in the interval 27-200; sequence GAEDDQLWLV…WAELFSARWR (174 aa). Residues 66–73, 134–136, and 147–149 contribute to the substrate site; these read RGGQITYH, SLG, and GIA. The active-site Acyl-thioester intermediate is Cys165.

The protein belongs to the LipB family.

It localises to the cytoplasm. The enzyme catalyses octanoyl-[ACP] + L-lysyl-[protein] = N(6)-octanoyl-L-lysyl-[protein] + holo-[ACP] + H(+). It participates in protein modification; protein lipoylation via endogenous pathway; protein N(6)-(lipoyl)lysine from octanoyl-[acyl-carrier-protein]: step 1/2. In terms of biological role, catalyzes the transfer of endogenously produced octanoic acid from octanoyl-acyl-carrier-protein onto the lipoyl domains of lipoate-dependent enzymes. Lipoyl-ACP can also act as a substrate although octanoyl-ACP is likely to be the physiological substrate. In Dichelobacter nodosus (strain VCS1703A), this protein is Octanoyltransferase.